A 436-amino-acid chain; its full sequence is Serine/threonine-protein kinase STK11 (436 aa).

Ser31 carries the phosphoserine modification. N6-acetyllysine occurs at positions 44 and 48. A sufficient for interaction with SIRT1 region spans residues 45–90 (LIGKYLMGDLLGEGSYGKVKEVLDSETLCRRAVKILKKKKLRRIPN). The Protein kinase domain occupies 49–309 (YLMGDLLGEG…IRQIRQHSWF (261 aa)). ATP is bound by residues 55 to 63 (LGEGSYGKV) and Lys78. An N6-acetyllysine mark is found at Lys96 and Lys97. Asp176 acts as the Proton acceptor in catalysis. At Thr189 the chain carries Phosphothreonine; by autocatalysis. 2 positions are modified to N6-acetyllysine: Lys296 and Lys311. Ser325 is subject to Phosphoserine. Thr336 carries the phosphothreonine; by autocatalysis modification. The residue at position 366 (Thr366) is a Phosphothreonine; by ATM and autocatalysis. Residues 398-421 (TEPQLSSKVKPEGRPGTANPARKV) form a disordered region. Ser403 bears the Phosphoserine mark. Lys420 is modified (N6-acetyllysine). Cys422 is lipidated: S-palmitoyl cysteine. An N6-acetyllysine modification is found at Lys426. A Phosphoserine; by autocatalysis, PKA, PKC/PRKCZ and RPS6KA1 modification is found at Ser431. Cys433 bears the Cysteine methyl ester mark. Residue Cys433 is the site of S-farnesyl cysteine attachment. Lys434 is modified (N6-acetyllysine). Positions 434–436 (KQQ) are cleaved as a propeptide — removed in mature form.

This sequence belongs to the protein kinase superfamily. CAMK Ser/Thr protein kinase family. LKB1 subfamily. Catalytic component of a trimeric complex composed of STK11/LKB1, STRAD (STRADA or STRADB) and CAB39/MO25 (CAB39/MO25alpha or CAB39L/MO25beta): the complex tethers STK11/LKB1 in the cytoplasm and stimulates its catalytic activity. Found in a ternary complex composed of SMAD4, STK11/LKB1 and STK11IP. Interacts with p53/TP53, SMAD4, STK11IP and WDR6. Interacts with NR4A1. Interacts with NISCH; this interaction may increase STK11 activity. Interacts with PTEN, leading to PTEN phosphorylation. Interacts with SIRT1; the interaction deacetylates STK11. Interacts with CDKN1A. Requires Mg(2+) as cofactor. Mn(2+) serves as cofactor. Post-translationally, phosphorylated by ATM at Thr-366 following ionizing radiation (IR). Phosphorylation at Ser-431 by RPS6KA1 and/or some PKA is required to inhibit cell growth. Phosphorylation at Ser-431 is also required during neuronal polarization to mediate phosphorylation of BRSK1 and BRSK2. Phosphorylation by PKC/PRKCZ at Ser-399 in isoform 2 promotes metformin (or peroxynitrite)-induced nuclear export of STK11 and activation of AMPK. UV radiation-induced phosphorylation at Thr-366 mediates CDKN1A degradation. Acetylated. Deacetylation at Lys-48 enhances cytoplasmic localization and kinase activity in vitro. Widely expressed. As to expression, predominantly expressed in testis (at protein level). In terms of tissue distribution, expressed in adult brain and liver and absent from tissues derived from postnatal day 7.

The protein localises to the nucleus. Its subcellular location is the cytoplasm. It localises to the membrane. It is found in the mitochondrion. It carries out the reaction L-seryl-[protein] + ATP = O-phospho-L-seryl-[protein] + ADP + H(+). The enzyme catalyses L-threonyl-[protein] + ATP = O-phospho-L-threonyl-[protein] + ADP + H(+). With respect to regulation, activated by forming a complex with STRAD (STRADA or STRADB) and CAB39/MO25 (CAB39/MO25alpha or CAB39L/MO25beta): STRADA (or STRADB)-binding promotes a conformational change of STK11/LKB1 in an active conformation, which is stabilized by CAB39/MO25alpha (or CAB39L/MO25beta) interacting with the STK11/LKB1 activation loop. Sequestration in the nucleus by NR4A1 prevents it from phosphorylating and activating cytoplasmic AMPK. Its function is as follows. Tumor suppressor serine/threonine-protein kinase that controls the activity of AMP-activated protein kinase (AMPK) family members, thereby playing a role in various processes such as cell metabolism, cell polarity, apoptosis and DNA damage response. Acts by phosphorylating the T-loop of AMPK family proteins, thus promoting their activity: phosphorylates PRKAA1, PRKAA2, BRSK1, BRSK2, MARK1, MARK2, MARK3, MARK4, NUAK1, NUAK2, SIK1, SIK2, SIK3 and SNRK but not MELK. Also phosphorylates non-AMPK family proteins such as STRADA, PTEN and possibly p53/TP53. Acts as a key upstream regulator of AMPK by mediating phosphorylation and activation of AMPK catalytic subunits PRKAA1 and PRKAA2 and thereby regulates processes including: inhibition of signaling pathways that promote cell growth and proliferation when energy levels are low, glucose homeostasis in liver, activation of autophagy when cells undergo nutrient deprivation, and B-cell differentiation in the germinal center in response to DNA damage. Also acts as a regulator of cellular polarity by remodeling the actin cytoskeleton. Required for cortical neuron polarization by mediating phosphorylation and activation of BRSK1 and BRSK2, leading to axon initiation and specification. Involved in DNA damage response: interacts with p53/TP53 and recruited to the CDKN1A/WAF1 promoter to participate in transcription activation. Able to phosphorylate p53/TP53; the relevance of such result in vivo is however unclear and phosphorylation may be indirect and mediated by downstream STK11/LKB1 kinase NUAK1. Also acts as a mediator of p53/TP53-dependent apoptosis via interaction with p53/TP53: translocates to the mitochondrion during apoptosis and regulates p53/TP53-dependent apoptosis pathways. Regulates UV radiation-induced DNA damage response mediated by CDKN1A. In association with NUAK1, phosphorylates CDKN1A in response to UV radiation and contributes to its degradation which is necessary for optimal DNA repair. In terms of biological role, has a role in spermiogenesis. This is Serine/threonine-protein kinase STK11 from Mus musculus (Mouse).